The sequence spans 435 residues: Methylenetetrahydrofolate--tRNA-(uracil-5-)-methyltransferase TrmFO (435 aa).

Residue 7 to 12 (GAGLAG) participates in FAD binding.

This sequence belongs to the MnmG family. TrmFO subfamily. The cofactor is FAD.

The protein resides in the cytoplasm. It catalyses the reaction uridine(54) in tRNA + (6R)-5,10-methylene-5,6,7,8-tetrahydrofolate + NADH + H(+) = 5-methyluridine(54) in tRNA + (6S)-5,6,7,8-tetrahydrofolate + NAD(+). The enzyme catalyses uridine(54) in tRNA + (6R)-5,10-methylene-5,6,7,8-tetrahydrofolate + NADPH + H(+) = 5-methyluridine(54) in tRNA + (6S)-5,6,7,8-tetrahydrofolate + NADP(+). Catalyzes the folate-dependent formation of 5-methyl-uridine at position 54 (M-5-U54) in all tRNAs. The protein is Methylenetetrahydrofolate--tRNA-(uracil-5-)-methyltransferase TrmFO of Thermotoga sp. (strain RQ2).